Here is a 238-residue protein sequence, read N- to C-terminus: tRNA (guanine-N(7)-)-methyltransferase (238 aa).

S-adenosyl-L-methionine contacts are provided by Glu68, Glu93, Asp120, and Asp143. Asp143 is an active-site residue. Residues Lys147, Asp179, and 216-219 (TKFE) contribute to the substrate site.

Belongs to the class I-like SAM-binding methyltransferase superfamily. TrmB family.

The enzyme catalyses guanosine(46) in tRNA + S-adenosyl-L-methionine = N(7)-methylguanosine(46) in tRNA + S-adenosyl-L-homocysteine. It functions in the pathway tRNA modification; N(7)-methylguanine-tRNA biosynthesis. Functionally, catalyzes the formation of N(7)-methylguanine at position 46 (m7G46) in tRNA. The protein is tRNA (guanine-N(7)-)-methyltransferase of Shewanella baltica (strain OS195).